A 213-amino-acid chain; its full sequence is Small ribosomal subunit protein eS1 (213 aa).

Positions 189 to 213 (ARPEEVAAEEETAVDVDEEDVDVEA) are disordered. The segment covering 194 to 213 (VAAEEETAVDVDEEDVDVEA) has biased composition (acidic residues).

Belongs to the eukaryotic ribosomal protein eS1 family.

This Haloarcula marismortui (strain ATCC 43049 / DSM 3752 / JCM 8966 / VKM B-1809) (Halobacterium marismortui) protein is Small ribosomal subunit protein eS1.